Consider the following 522-residue polypeptide: Target of rapamycin complex 2 subunit MAPKAP1 (522 aa).

A2 is modified (N-acetylalanine). The interval 2-184 is interaction with MAP3K2; it reads AFLDNPTIIL…KKIDVYLPLH (183 aa). The segment at 2 to 267 is interaction with NBN; that stretch reads AFLDNPTIIL…GFSTLALVEK (266 aa). Positions 38-59 are disordered; sequence LEKTHPPSVPGDSGSEVQGSSG. The residue at position 86 (T86) is a Phosphothreonine; by PKB/AKT1 and RPS6KB1. S128 bears the Phosphoserine; by PKC mark. The region spanning 139-267 is the CRIM domain; it reads QSILSVRLEQ…GFSTLALVEK (129 aa). S186, S315, and S356 each carry phosphoserine. An SIN1-type RBD region spans residues 279–353; that stretch reads LFVRINAAHG…QNAWEFCLVR (75 aa). Positions 382 to 487 constitute an SIN1-type PH domain; the sequence is HYKSFKVSMI…IVLKVNYILE (106 aa). R393 is a binding site for a 1,2-diacyl-sn-glycero-3-phospho-(1D-myo-inositol-3,4,5-trisphosphate). T398 carries the phosphothreonine; by RPS6KB1 modification. A 1,2-diacyl-sn-glycero-3-phospho-(1D-myo-inositol-3,4,5-trisphosphate) is bound by residues K428 and K464. The interval 468–522 is interaction with ATF2; sequence FESDAATVSEIVLKVNYILESRASTARADYLAQKQRKLNRRTSFSFQKEKKSGQQ. S510 carries the post-translational modification Phosphoserine.

Belongs to the SIN1 family. As to quaternary structure, component of the mechanistic target of rapamycin complex 2 (mTORC2), consisting in two heterotretramers composed of MTOR, MLST8, RICTOR and MAPKAP1/SIN1. The mTORC2 core complex associates with PRR5/PROTOR1 and/or PRR5L/PROTOR2. Contrary to mTORC1, mTORC2 does not bind to and is not sensitive to FKBP12-rapamycin. Interacts with MAP3K2. Interacts with ATF2. Interacts with MAPK8. Interacts with GTP-bound HRAS and KRAS; inhibiting their activity. Interacts with IFNAR2. Post-translationally, phosphorylation at Ser-128 by PKC promotes relocalization to the perinuclear region, where the mTORC2 complex specifically mediates phosphorylation of SGK1. Phosphorylated at Thr-86 by AKT1 or RPS6KB1 in the presence of growth factors; the effect of this phosphorylation is however unclear. According to two studies, phosphorylation at Thr-86 by AKT1 is part of a positive feedback loop that increases mTORC2 activation. According to another study, phosphorylation at Thr-86 and Thr-398 by RPS6KB1 promotes dissociation from the mTORC2 complex, leading to inhibit mTORC2 signaling. In terms of tissue distribution, uniquitously expressed, with highest levels in testis, kidney and liver. Present in renal tubule cells (at protein level).

It is found in the cell membrane. It localises to the endoplasmic reticulum membrane. The protein resides in the early endosome membrane. Its subcellular location is the late endosome membrane. The protein localises to the lysosome membrane. It is found in the golgi apparatus membrane. It localises to the mitochondrion outer membrane. The protein resides in the cytoplasm. Its subcellular location is the perinuclear region. The protein localises to the nucleus. Phosphatidylinositol 3,4,5-trisphosphate (PI(3,4,5)P3) promotes MTOR activation by relieving MAPKAP1/SIN1-mediated inhibition of MTOR that takes place in absence of PI(3,4,5)P3. Its function is as follows. Component of the mechanistic target of rapamycin complex 2 (mTORC2), which transduces signals from growth factors to pathways involved in proliferation, cytoskeletal organization, lipogenesis and anabolic output. In response to growth factors, mTORC2 phosphorylates and activates AGC protein kinase family members, including AKT (AKT1, AKT2 and AKT3), PKC (PRKCA, PRKCB and PRKCE) and SGK1. In contrast to mTORC1, mTORC2 is nutrient-insensitive. Within the mTORC2 complex, MAPKAP1/SIN1 acts as a substrate adapter which recognizes and binds AGC protein kinase family members for phosphorylation by MTOR. mTORC2 plays a critical role in AKT1 activation by mediating phosphorylation of different sites depending on the context, such as 'Thr-450', 'Ser-473', 'Ser-477' or 'Thr-479', facilitating the phosphorylation of the activation loop of AKT1 on 'Thr-308' by PDPK1/PDK1 which is a prerequisite for full activation. mTORC2 catalyzes the phosphorylation of SGK1 at 'Ser-422' and of PRKCA on 'Ser-657'. The mTORC2 complex also phosphorylates various proteins involved in insulin signaling, such as FBXW8 and IGF2BP1. mTORC2 acts upstream of Rho GTPases to regulate the actin cytoskeleton, probably by activating one or more Rho-type guanine nucleotide exchange factors. mTORC2 promotes the serum-induced formation of stress-fibers or F-actin. MAPKAP1 inhibits MAP3K2 by preventing its dimerization and autophosphorylation. Inhibits HRAS and KRAS independently of mTORC2 complex. Enhances osmotic stress-induced phosphorylation of ATF2 and ATF2-mediated transcription. Involved in ciliogenesis, regulates cilia length through its interaction with CCDC28B independently of mTORC2 complex. The polypeptide is Target of rapamycin complex 2 subunit MAPKAP1 (Mus musculus (Mouse)).